The primary structure comprises 712 residues: Ribosomal RNA large subunit methyltransferase K/L (712 aa).

The THUMP domain maps to 42 to 153 (QALRIVMWSR…KGRASLSIDL (112 aa)).

It belongs to the methyltransferase superfamily. RlmKL family.

The protein resides in the cytoplasm. The enzyme catalyses guanosine(2445) in 23S rRNA + S-adenosyl-L-methionine = N(2)-methylguanosine(2445) in 23S rRNA + S-adenosyl-L-homocysteine + H(+). It catalyses the reaction guanosine(2069) in 23S rRNA + S-adenosyl-L-methionine = N(2)-methylguanosine(2069) in 23S rRNA + S-adenosyl-L-homocysteine + H(+). Its function is as follows. Specifically methylates the guanine in position 2445 (m2G2445) and the guanine in position 2069 (m7G2069) of 23S rRNA. This is Ribosomal RNA large subunit methyltransferase K/L from Stenotrophomonas maltophilia (strain K279a).